A 536-amino-acid chain; its full sequence is Probable E3 ubiquitin-protein ligase ARI13 (536 aa).

Residues 83–328 (KISSCGICFK…GFYKFCNVSM (246 aa)) form a TRIAD supradomain region. The Zn(2+) site is built by C87, C90, C106, H108, C111, C114, C135, C140, C180, C185, C210, C212, C217, C220, H225, C230, C277, C280, C297, C299, C304, C307, H314, and C324. Residues 87-140 (CGICFKTCDDGDYLISTPFCSHMFCKSCWRKYLEKNFYLVEKTQTRISCPHGAC) form an RING-type 1 zinc finger. The IBR-type zinc-finger motif lies at 158–230 (EMYVEYILRS…MLESHKPVTC (73 aa)). The segment at 277-307 (CPHCLRPADLGTKQYLRFLTCACNGRFCWKC) adopts an RING-type 2; atypical zinc-finger fold. The RanBP2-type zinc finger occupies 495–526 (DYGGLFWLCDRCTYGNTWFHKECLMCSDDIAA).

Belongs to the RBR family. Ariadne subfamily. Zn(2+) serves as cofactor.

The catalysed reaction is [E2 ubiquitin-conjugating enzyme]-S-ubiquitinyl-L-cysteine + [acceptor protein]-L-lysine = [E2 ubiquitin-conjugating enzyme]-L-cysteine + [acceptor protein]-N(6)-ubiquitinyl-L-lysine.. It functions in the pathway protein modification; protein ubiquitination. In terms of biological role, might act as an E3 ubiquitin-protein ligase, or as part of E3 complex, which accepts ubiquitin from specific E2 ubiquitin-conjugating enzymes and then transfers it to substrates. This Arabidopsis thaliana (Mouse-ear cress) protein is Probable E3 ubiquitin-protein ligase ARI13 (ARI13).